The chain runs to 131 residues: Ribosome-binding factor A (131 aa).

It belongs to the RbfA family. Monomer. Binds 30S ribosomal subunits, but not 50S ribosomal subunits or 70S ribosomes.

Its subcellular location is the cytoplasm. Its function is as follows. One of several proteins that assist in the late maturation steps of the functional core of the 30S ribosomal subunit. Associates with free 30S ribosomal subunits (but not with 30S subunits that are part of 70S ribosomes or polysomes). Required for efficient processing of 16S rRNA. May interact with the 5'-terminal helix region of 16S rRNA. The sequence is that of Ribosome-binding factor A from Picosynechococcus sp. (strain ATCC 27264 / PCC 7002 / PR-6) (Agmenellum quadruplicatum).